A 370-amino-acid chain; its full sequence is Phospho-2-dehydro-3-deoxyheptonate aldolase, tyrosine-inhibited (370 aa).

Position 2 is an N-acetylserine (S2).

The protein belongs to the class-I DAHP synthase family.

The catalysed reaction is D-erythrose 4-phosphate + phosphoenolpyruvate + H2O = 7-phospho-2-dehydro-3-deoxy-D-arabino-heptonate + phosphate. It functions in the pathway metabolic intermediate biosynthesis; chorismate biosynthesis; chorismate from D-erythrose 4-phosphate and phosphoenolpyruvate: step 1/7. Its activity is regulated as follows. Inhibited by tyrosine. Its function is as follows. Stereospecific condensation of phosphoenolpyruvate (PEP) and D-erythrose-4-phosphate (E4P) giving rise to 3-deoxy-D-arabino-heptulosonate-7-phosphate (DAHP). The polypeptide is Phospho-2-dehydro-3-deoxyheptonate aldolase, tyrosine-inhibited (ARO4) (Saccharomyces cerevisiae (strain ATCC 204508 / S288c) (Baker's yeast)).